The sequence spans 482 residues: Glutamate--tRNA ligase (482 aa).

The 'HIGH' region motif lies at 9–19; sequence PSPTGPLHIGG. The short motif at 250 to 254 is the 'KMSKS' region element; the sequence is KMSKR. Lys-253 is an ATP binding site.

It belongs to the class-I aminoacyl-tRNA synthetase family. Glutamate--tRNA ligase type 1 subfamily. As to quaternary structure, monomer.

The protein localises to the cytoplasm. The enzyme catalyses tRNA(Glu) + L-glutamate + ATP = L-glutamyl-tRNA(Glu) + AMP + diphosphate. Its function is as follows. Catalyzes the attachment of glutamate to tRNA(Glu) in a two-step reaction: glutamate is first activated by ATP to form Glu-AMP and then transferred to the acceptor end of tRNA(Glu). This is Glutamate--tRNA ligase from Desulforamulus reducens (strain ATCC BAA-1160 / DSM 100696 / MI-1) (Desulfotomaculum reducens).